A 787-amino-acid polypeptide reads, in one-letter code: Zinc finger protein 227 (787 aa).

One can recognise a KRAB domain in the interval 23–94 (VTFKDVAVVF…ERETQRNGHS (72 aa)). 18 consecutive C2H2-type zinc fingers follow at residues 243 to 275 (HPCRVCGEGFSHGAVLPVHQVDPGEKCSHLQTH), 312 to 334 (YRCDSCGKAFGSSTGLIIHYRTH), 340 to 362 (YRCEACGKCFSQSSNFQCHQRVH), 368 to 390 (YKCEECGKGFGWSVNLRVHQRVH), 396 to 418 (YKCEECGKGFTQAAHYHIHQRVH), 424 to 446 (YKCDVCGKGFSHNSPLICHRRVH), 452 to 474 (YRCEACGKGFTRNTDLHIHFRVH), 480 to 502 (YTCKECGKGFSQASNLQVHQNVH), 508 to 530 (FKCETCGKGFSQSSKLQTHQRVH), 536 to 558 (YRCDVCGKDFSYSSNLKLHQVIH), 564 to 586 (YTCEACGKGFSWRSNLHAHQRVH), 592 to 614 (YKCEACDKSFSQAIDFRVHQRVH), 620 to 642 (YKCGVCGKGFSQSSGLQSHQRVH), 648 to 670 (YKCDVCGKGFRYSSQFIYHQRGH), 676 to 698 (YKCEECGKGFGRSLNLRHHQRVH), 704 to 726 (HKCEECGKAFSLPSNLRVHLSVH), 732 to 754 (FKCEDCGKGFSQSSRLQAHQRVH), and 760 to 782 (YKCNICGKDFSHRSRLTYHQKVH).

This sequence belongs to the krueppel C2H2-type zinc-finger protein family.

It is found in the nucleus. Functionally, may be involved in transcriptional regulation. The chain is Zinc finger protein 227 (ZNF227) from Bos taurus (Bovine).